Reading from the N-terminus, the 916-residue chain is ATP-dependent RNA helicase DBP4 (916 aa).

Positions 1 to 34 (MPPSSAAEGSTKRKKGGAAPHLKSRSKNARKLKR) are disordered. The span at 12–33 (KRKKGGAAPHLKSRSKNARKLK) shows a compositional bias: basic residues. The short motif at 58-86 (KQFTQLPLSDRTCRGLKRAGYTDMTDIQA) is the Q motif element. Positions 89–263 (LSLSLKGKDV…RLSLQDPEYV (175 aa)) constitute a Helicase ATP-binding domain. 102 to 109 (ARTGSGKT) provides a ligand contact to ATP. The DEAD box signature appears at 211–214 (DEAD). In terms of domain architecture, Helicase C-terminal spans 277–442 (GLEQHYMLVE…PKESKTQSIQ (166 aa)). 3 disordered regions span residues 519–554 (AQQQ…KYDR), 575–667 (DASS…GDDG), and 752–916 (AFNK…AGDA). The segment covering 539 to 554 (AERADKNGKVRTKYDR) has biased composition (basic and acidic residues). Acidic residues predominate over residues 576-593 (ASSEQDSSNDSDTSDDDS). Positions 608–623 (EETRYGRSAGRRKENR) are enriched in basic and acidic residues. The segment covering 630–642 (SDSEEDESDDEQN) has biased composition (acidic residues). 3 stretches are compositionally biased toward basic and acidic residues: residues 645–655 (GLHKIKSETKR), 766–788 (WAEE…AKEK), and 797–808 (KEREKALERGDA). Composition is skewed to acidic residues over residues 810 to 826 (DNGD…EEEE) and 844 to 871 (ETPD…DDDE).

This sequence belongs to the DEAD box helicase family. DDX10/DBP4 subfamily. As to quaternary structure, interacts with the U3 and U14 snoRNAs. Associates with pre-ribosomal complexes.

The protein localises to the nucleus. It localises to the nucleolus. It catalyses the reaction ATP + H2O = ADP + phosphate + H(+). In terms of biological role, ATP-dependent RNA helicase required for ribosome biogenesis. Involved in the release of U14 snoRNA in pre-ribosomal complexes. Required for pre-rRNA cleavage at site A2. This is ATP-dependent RNA helicase DBP4 (DBP4) from Mycosarcoma maydis (Corn smut fungus).